The primary structure comprises 243 residues: Putative outer membrane protein RP075 (243 aa).

An N-terminal signal peptide occupies residues 1–23; it reads MLRIVKKLWVILFISNISINSFA.

Belongs to the OmpW/AlkL family.

The protein resides in the cell outer membrane. This Rickettsia prowazekii (strain Madrid E) protein is Putative outer membrane protein RP075.